We begin with the raw amino-acid sequence, 172 residues long: MFINIFLFLFAATINISSSLRYAGFSSYIYTPNKYINNNVMDRKFIRRLNAVDESIKNNEHIIKLTDNAKNKIKQLVTEIEDKNLILKLCVENGGCKGLKYKLNPIKKEDIETDDYIQQFDELKFILSIDSTSVIYIYNNILDYSNDLINGGFKFINPNATKKCGCGKSFNV.

Positions Met1–Ser19 are cleaved as a signal peptide. Residues Cys96, Cys164, and Cys166 each contribute to the [4Fe-4S] cluster site.

Belongs to the HesB/IscA family. As to quaternary structure, homodimer.

It is found in the plastid. It localises to the apicoplast. Its pathway is cofactor biosynthesis; iron-sulfur cluster biosynthesis. In terms of biological role, participates in the sulfur mobilization (SUF) pathway for iron-sulfur (Fe-S) cluster biogenesis. Involved in the pre-assembly of [4Fe-4S] clusters and their transfer to target proteins. The polypeptide is Iron-sulfur cluster assembly protein SufA (Plasmodium berghei (strain Anka)).